The sequence spans 195 residues: Glycerol-3-phosphate acyltransferase 2 (195 aa).

6 helical membrane-spanning segments follow: residues 4–24 (VVSL…VAGV), 52–72 (GAAA…VGLA), 73–93 (LWLA…GVVF), 115–135 (AMLV…LALI), 150–170 (AIPF…SRLG), and 171–191 (GGAE…HLLA).

Belongs to the PlsY family. In terms of assembly, probably interacts with PlsX.

It is found in the cell membrane. It carries out the reaction an acyl phosphate + sn-glycerol 3-phosphate = a 1-acyl-sn-glycero-3-phosphate + phosphate. Its pathway is lipid metabolism; phospholipid metabolism. In terms of biological role, catalyzes the transfer of an acyl group from acyl-phosphate (acyl-PO(4)) to glycerol-3-phosphate (G3P) to form lysophosphatidic acid (LPA). This enzyme utilizes acyl-phosphate as fatty acyl donor, but not acyl-CoA or acyl-ACP. This Deinococcus radiodurans (strain ATCC 13939 / DSM 20539 / JCM 16871 / CCUG 27074 / LMG 4051 / NBRC 15346 / NCIMB 9279 / VKM B-1422 / R1) protein is Glycerol-3-phosphate acyltransferase 2.